The primary structure comprises 256 residues: Small ribosomal subunit protein eS1 (256 aa).

Basic residues predominate over residues 1–18 (MAVGKNKRLSKGKKGLKK). A disordered region spans residues 1–22 (MAVGKNKRLSKGKKGLKKKTQD). An N-acetylalanine; partial modification is found at Ala-2.

The protein belongs to the eukaryotic ribosomal protein eS1 family. In terms of assembly, component of the small ribosomal subunit (SSU). Mature N.crassa ribosomes consist of a small (40S) and a large (60S) subunit. The 40S small subunit contains 1 molecule of ribosomal RNA (18S rRNA) and at least 32 different proteins. The large 60S subunit contains 3 rRNA molecules (26S, 5.8S and 5S rRNA) and at least 42 different proteins.

The protein resides in the cytoplasm. In terms of biological role, component of the ribosome, a large ribonucleoprotein complex responsible for the synthesis of proteins in the cell. The small ribosomal subunit (SSU) binds messenger RNAs (mRNAs) and translates the encoded message by selecting cognate aminoacyl-transfer RNA (tRNA) molecules. The large subunit (LSU) contains the ribosomal catalytic site termed the peptidyl transferase center (PTC), which catalyzes the formation of peptide bonds, thereby polymerizing the amino acids delivered by tRNAs into a polypeptide chain. The nascent polypeptides leave the ribosome through a tunnel in the LSU and interact with protein factors that function in enzymatic processing, targeting, and the membrane insertion of nascent chains at the exit of the ribosomal tunnel. This chain is Small ribosomal subunit protein eS1 (rps1), found in Neurospora crassa (strain ATCC 24698 / 74-OR23-1A / CBS 708.71 / DSM 1257 / FGSC 987).